Consider the following 191-residue polypeptide: Putative 3-methyladenine DNA glycosylase (191 aa).

It belongs to the DNA glycosylase MPG family.

The sequence is that of Putative 3-methyladenine DNA glycosylase from Carboxydothermus hydrogenoformans (strain ATCC BAA-161 / DSM 6008 / Z-2901).